The following is a 358-amino-acid chain: 3-isopropylmalate dehydrogenase 2 (358 aa).

NAD(+) is bound at residue 74 to 87; sequence GPKWDKLPAESRPE. Substrate is bound by residues Arg94, Arg104, Arg132, and Asp221. Mg(2+) is bound by residues Asp221, Asp245, and Asp249. Position 279–291 (279–291) interacts with NAD(+); the sequence is GSAPDIAGQGVAN.

This sequence belongs to the isocitrate and isopropylmalate dehydrogenases family. LeuB type 1 subfamily. In terms of assembly, homodimer. It depends on Mg(2+) as a cofactor. Mn(2+) is required as a cofactor.

It is found in the cytoplasm. The catalysed reaction is (2R,3S)-3-isopropylmalate + NAD(+) = 4-methyl-2-oxopentanoate + CO2 + NADH. The protein operates within amino-acid biosynthesis; L-leucine biosynthesis; L-leucine from 3-methyl-2-oxobutanoate: step 3/4. In terms of biological role, catalyzes the oxidation of 3-carboxy-2-hydroxy-4-methylpentanoate (3-isopropylmalate) to 3-carboxy-4-methyl-2-oxopentanoate. The product decarboxylates to 4-methyl-2 oxopentanoate. This Dechloromonas aromatica (strain RCB) protein is 3-isopropylmalate dehydrogenase 2.